Reading from the N-terminus, the 210-residue chain is UPF0637 protein RBAM_014510 (210 aa).

Belongs to the UPF0637 family.

This chain is UPF0637 protein RBAM_014510, found in Bacillus velezensis (strain DSM 23117 / BGSC 10A6 / LMG 26770 / FZB42) (Bacillus amyloliquefaciens subsp. plantarum).